Reading from the N-terminus, the 750-residue chain is Phosphoribosylformylglycinamidine synthase subunit PurL (750 aa).

H54 is a catalytic residue. ATP is bound by residues Y57 and K101. Position 103 (E103) interacts with Mg(2+). Residues 104-107 and R126 contribute to the substrate site; that span reads SHNH. The active-site Proton acceptor is the H105. Residue D127 coordinates Mg(2+). Residue Q251 participates in substrate binding. D279 is a binding site for Mg(2+). 323-325 is a substrate binding site; the sequence is ESQ. Residues D509 and G546 each coordinate ATP. N547 lines the Mg(2+) pocket. Residue S549 coordinates substrate.

The protein belongs to the FGAMS family. Monomer. Part of the FGAM synthase complex composed of 1 PurL, 1 PurQ and 2 PurS subunits.

It is found in the cytoplasm. It catalyses the reaction N(2)-formyl-N(1)-(5-phospho-beta-D-ribosyl)glycinamide + L-glutamine + ATP + H2O = 2-formamido-N(1)-(5-O-phospho-beta-D-ribosyl)acetamidine + L-glutamate + ADP + phosphate + H(+). The protein operates within purine metabolism; IMP biosynthesis via de novo pathway; 5-amino-1-(5-phospho-D-ribosyl)imidazole from N(2)-formyl-N(1)-(5-phospho-D-ribosyl)glycinamide: step 1/2. Part of the phosphoribosylformylglycinamidine synthase complex involved in the purines biosynthetic pathway. Catalyzes the ATP-dependent conversion of formylglycinamide ribonucleotide (FGAR) and glutamine to yield formylglycinamidine ribonucleotide (FGAM) and glutamate. The FGAM synthase complex is composed of three subunits. PurQ produces an ammonia molecule by converting glutamine to glutamate. PurL transfers the ammonia molecule to FGAR to form FGAM in an ATP-dependent manner. PurS interacts with PurQ and PurL and is thought to assist in the transfer of the ammonia molecule from PurQ to PurL. This is Phosphoribosylformylglycinamidine synthase subunit PurL from Cutibacterium acnes (strain DSM 16379 / KPA171202) (Propionibacterium acnes).